Consider the following 351-residue polypeptide: Peptide chain release factor 1 (351 aa).

Glutamine 229 is subject to N5-methylglutamine. The segment at 279-300 (ADAERAADRKSQVGSGDRSERI) is disordered.

This sequence belongs to the prokaryotic/mitochondrial release factor family. In terms of processing, methylated by PrmC. Methylation increases the termination efficiency of RF1.

Its subcellular location is the cytoplasm. In terms of biological role, peptide chain release factor 1 directs the termination of translation in response to the peptide chain termination codons UAG and UAA. This chain is Peptide chain release factor 1, found in Paracoccus denitrificans (strain Pd 1222).